We begin with the raw amino-acid sequence, 491 residues long: tRNA-2-methylthio-N(6)-dimethylallyladenosine synthase (491 aa).

The MTTase N-terminal domain occupies 54 to 172 (KTYHIKTFGC…ILNLLEQVIF (119 aa)). 6 residues coordinate [4Fe-4S] cluster: Cys-63, Cys-99, Cys-133, Cys-209, Cys-213, and Cys-216. The Radical SAM core domain occupies 195–426 (RTNNLKGFVN…NEMVKTFSKK (232 aa)). The region spanning 429–491 (EKYVNKVLDV…RFTLNGKMID (63 aa)) is the TRAM domain.

Belongs to the methylthiotransferase family. MiaB subfamily. In terms of assembly, monomer. It depends on [4Fe-4S] cluster as a cofactor.

Its subcellular location is the cytoplasm. It catalyses the reaction N(6)-dimethylallyladenosine(37) in tRNA + (sulfur carrier)-SH + AH2 + 2 S-adenosyl-L-methionine = 2-methylsulfanyl-N(6)-dimethylallyladenosine(37) in tRNA + (sulfur carrier)-H + 5'-deoxyadenosine + L-methionine + A + S-adenosyl-L-homocysteine + 2 H(+). Its function is as follows. Catalyzes the methylthiolation of N6-(dimethylallyl)adenosine (i(6)A), leading to the formation of 2-methylthio-N6-(dimethylallyl)adenosine (ms(2)i(6)A) at position 37 in tRNAs that read codons beginning with uridine. The sequence is that of tRNA-2-methylthio-N(6)-dimethylallyladenosine synthase from Malacoplasma penetrans (strain HF-2) (Mycoplasma penetrans).